Consider the following 338-residue polypeptide: 1-aminocyclopropane-1-carboxylate deaminase (338 aa).

N6-(pyridoxal phosphate)lysine is present on Lys51. The active-site Nucleophile is the Ser78.

It belongs to the ACC deaminase/D-cysteine desulfhydrase family. Homotrimer. It depends on pyridoxal 5'-phosphate as a cofactor.

It carries out the reaction 1-aminocyclopropane-1-carboxylate + H2O = 2-oxobutanoate + NH4(+). In terms of biological role, catalyzes a cyclopropane ring-opening reaction, the irreversible conversion of 1-aminocyclopropane-1-carboxylate (ACC) to ammonia and alpha-ketobutyrate. Allows growth on ACC as a nitrogen source. The protein is 1-aminocyclopropane-1-carboxylate deaminase of Burkholderia ambifaria (strain ATCC BAA-244 / DSM 16087 / CCUG 44356 / LMG 19182 / AMMD) (Burkholderia cepacia (strain AMMD)).